The primary structure comprises 329 residues: D-lactate dehydrogenase (329 aa).

NAD(+)-binding positions include 154–155 (KI), D174, 205–206 (CP), N211, 232–234 (TSR), and D258. R234 is an active-site residue. The active site involves E263. H295 acts as the Proton donor in catalysis.

Belongs to the D-isomer specific 2-hydroxyacid dehydrogenase family.

It carries out the reaction (R)-lactate + NAD(+) = pyruvate + NADH + H(+). Functionally, fermentative lactate dehydrogenase. In Escherichia coli (strain K12), this protein is D-lactate dehydrogenase (ldhA).